The primary structure comprises 376 residues: Methionine import ATP-binding protein MetN 2 (376 aa).

An ABC transporter domain is found at 34–273; it reads VRFINLGKTY…PQHDVSKTLL (240 aa). Position 70–77 (70–77) interacts with ATP; that stretch reads GRSGAGKS.

The protein belongs to the ABC transporter superfamily. Methionine importer (TC 3.A.1.24) family. In terms of assembly, the complex is composed of two ATP-binding proteins (MetN), two transmembrane proteins (MetI) and a solute-binding protein (MetQ).

The protein localises to the cell inner membrane. It catalyses the reaction L-methionine(out) + ATP + H2O = L-methionine(in) + ADP + phosphate + H(+). It carries out the reaction D-methionine(out) + ATP + H2O = D-methionine(in) + ADP + phosphate + H(+). Its function is as follows. Part of the ABC transporter complex MetNIQ involved in methionine import. Responsible for energy coupling to the transport system. The polypeptide is Methionine import ATP-binding protein MetN 2 (Pseudomonas savastanoi pv. phaseolicola (strain 1448A / Race 6) (Pseudomonas syringae pv. phaseolicola (strain 1448A / Race 6))).